The following is a 320-amino-acid chain: Cytochrome f (320 aa).

The N-terminal stretch at 1 to 35 is a signal peptide; it reads MQNRKTFSWVKEQMTRSIYVSIMIYVITRASISNA. Heme contacts are provided by tyrosine 36, cysteine 56, cysteine 59, and histidine 60. The helical transmembrane segment at 286–306 threads the bilayer; the sequence is VQGLLFFLASVILAQIFLVLK.

This sequence belongs to the cytochrome f family. As to quaternary structure, the 4 large subunits of the cytochrome b6-f complex are cytochrome b6, subunit IV (17 kDa polypeptide, petD), cytochrome f and the Rieske protein, while the 4 small subunits are PetG, PetL, PetM and PetN. The complex functions as a dimer. Heme is required as a cofactor.

The protein localises to the plastid. It is found in the chloroplast thylakoid membrane. Its function is as follows. Component of the cytochrome b6-f complex, which mediates electron transfer between photosystem II (PSII) and photosystem I (PSI), cyclic electron flow around PSI, and state transitions. This Phalaenopsis aphrodite subsp. formosana (Moth orchid) protein is Cytochrome f.